We begin with the raw amino-acid sequence, 467 residues long: Proton extrusion protein PxcA (467 aa).

A disordered region spans residues 183-205 (TSPPQLIRPRTEQNKKPRGKADT). Basic and acidic residues predominate over residues 191-203 (PRTEQNKKPRGKA). Helical transmembrane passes span 249 to 269 (FILL…ALIV), 352 to 372 (IFSV…IMVL), 391 to 411 (IIIL…WEVI), and 427 to 447 (FIFL…KYWI).

Belongs to the CemA family.

The protein resides in the cell inner membrane. Required for H(+) efflux immediately after light irradiation to form a rapid H(+) concentration gradient across the thylakoid membranes. Together with PxcL, contributes to transient H(+) uptake following dark to light transition. This is Proton extrusion protein PxcA from Trichormus variabilis (strain ATCC 29413 / PCC 7937) (Anabaena variabilis).